The primary structure comprises 483 residues: UDP-N-acetylmuramoyl-L-alanyl-D-glutamate--2,6-diaminopimelate ligase (483 aa).

Residue Ser30 coordinates UDP-N-acetyl-alpha-D-muramoyl-L-alanyl-D-glutamate. An ATP-binding site is contributed by 109-115 (GTNGKTT). Residues 151 to 152 (TT), Ser178, and Arg186 contribute to the UDP-N-acetyl-alpha-D-muramoyl-L-alanyl-D-glutamate site. An N6-carboxylysine modification is found at Lys218. Residues Arg380, 403-406 (DNPR), Gly453, and Glu457 contribute to the meso-2,6-diaminopimelate site. The Meso-diaminopimelate recognition motif motif lies at 403-406 (DNPR).

This sequence belongs to the MurCDEF family. MurE subfamily. Requires Mg(2+) as cofactor. In terms of processing, carboxylation is probably crucial for Mg(2+) binding and, consequently, for the gamma-phosphate positioning of ATP.

The protein resides in the cytoplasm. The enzyme catalyses UDP-N-acetyl-alpha-D-muramoyl-L-alanyl-D-glutamate + meso-2,6-diaminopimelate + ATP = UDP-N-acetyl-alpha-D-muramoyl-L-alanyl-gamma-D-glutamyl-meso-2,6-diaminopimelate + ADP + phosphate + H(+). Its pathway is cell wall biogenesis; peptidoglycan biosynthesis. Its function is as follows. Catalyzes the addition of meso-diaminopimelic acid to the nucleotide precursor UDP-N-acetylmuramoyl-L-alanyl-D-glutamate (UMAG) in the biosynthesis of bacterial cell-wall peptidoglycan. This chain is UDP-N-acetylmuramoyl-L-alanyl-D-glutamate--2,6-diaminopimelate ligase, found in Chlamydia muridarum (strain MoPn / Nigg).